A 260-amino-acid polypeptide reads, in one-letter code: 2-oxo-tetronate isomerase (260 aa).

The Proton donor/acceptor role is filled by E143. Mg(2+) is bound by residues E143, D178, Q204, and E240. The Proton donor/acceptor role is filled by E240.

Belongs to the hyi family. OtnI subfamily.

The enzyme catalyses 2-dehydro-L-erythronate = 3-dehydro-L-erythronate. The catalysed reaction is 2-dehydro-D-erythronate = 3-dehydro-D-erythronate. In terms of biological role, catalyzes the isomerization of 2-oxo-tetronate to 3-oxo-tetronate. The chain is 2-oxo-tetronate isomerase from Cupriavidus necator (strain ATCC 17699 / DSM 428 / KCTC 22496 / NCIMB 10442 / H16 / Stanier 337) (Ralstonia eutropha).